The following is a 466-amino-acid chain: Argininosuccinate lyase (466 aa).

Residues Ser-27, Asn-114, and Thr-159 each coordinate 2-(N(omega)-L-arginino)succinate. The Proton acceptor role is filled by His-160. Ser-281 (proton donor) is an active-site residue. 2-(N(omega)-L-arginino)succinate-binding residues include Asn-289, Tyr-321, Gln-326, and Lys-329.

This sequence belongs to the lyase 1 family. Argininosuccinate lyase subfamily. As to quaternary structure, homotetramer. Eye lens.

It carries out the reaction 2-(N(omega)-L-arginino)succinate = fumarate + L-arginine. It functions in the pathway amino-acid biosynthesis; L-arginine biosynthesis; L-arginine from L-ornithine and carbamoyl phosphate: step 3/3. Functionally, delta crystallin, the principal crystallin in embryonic lens, is found only in birds and reptiles. This protein may also function as an enzymatically active argininosuccinate lyase. The polypeptide is Argininosuccinate lyase (ASL2) (Gallus gallus (Chicken)).